The sequence spans 111 residues: Putative single-stranded DNA-binding protein ycf41 (111 aa).

The 98-residue stretch at 1-98 (MNSCTLLVQI…FSTSRIFKYK (98 aa)) folds into the SSB domain.

It localises to the plastid. It is found in the chloroplast. This is Putative single-stranded DNA-binding protein ycf41 (ycf41) from Pyropia yezoensis (Susabi-nori).